Here is a 365-residue protein sequence, read N- to C-terminus: Phosphatidylcholine:ceramide cholinephosphotransferase 2 (365 aa).

The interval leucine 9 to arginine 50 is disordered. Positions serine 15–threonine 28 are enriched in low complexity. Helical transmembrane passes span glycine 80 to valine 100, phenylalanine 128 to phenylalanine 148, phenylalanine 159 to leucine 179, isoleucine 219 to phenylalanine 239, and phenylalanine 248 to valine 268. Histidine 229 is an active-site residue. Active-site residues include histidine 272 and aspartate 276. A helical membrane pass occupies residues tyrosine 273–tryptophan 290. The Cytoplasmic segment spans residues tyrosine 291 to threonine 365. 4 S-palmitoyl cysteine lipidation sites follow: cysteine 331, cysteine 332, cysteine 343, and cysteine 348.

It belongs to the sphingomyelin synthase family. Palmitoylated on Cys-331, Cys-332, Cys-343 and Cys-348; which plays an important role in plasma membrane localization. Expression restricted to late round spermatids and elongating spermatids but not detected in late elongate spermatids and Sertoli cells (at protein level).

The protein resides in the cell membrane. The protein localises to the golgi apparatus membrane. It catalyses the reaction an N-acylsphing-4-enine + a 1,2-diacyl-sn-glycero-3-phosphocholine = a sphingomyelin + a 1,2-diacyl-sn-glycerol. It carries out the reaction an N-acylsphinganine + a 1,2-diacyl-sn-glycero-3-phosphocholine = an N-acylsphinganine-1-phosphocholine + a 1,2-diacyl-sn-glycerol. The catalysed reaction is an N-acyl-(4R)-4-hydroxysphinganine + a 1,2-diacyl-sn-glycero-3-phosphocholine = an N-acyl-(4R)-4-hydroxysphinganine-phosphocholine + a 1,2-diacyl-sn-glycerol. The enzyme catalyses an N-acylsphing-4-enine + a 1,2-diacyl-sn-glycero-3-phosphoethanolamine = an N-acylsphing-4-enine 1-phosphoethanolamine + a 1,2-diacyl-sn-glycerol. It catalyses the reaction an N-acylsphinganine + a 1,2-diacyl-sn-glycero-3-phosphoethanolamine = an N-acylsphinganine-1-phosphoethanolamine + a 1,2-diacyl-sn-glycerol. It carries out the reaction an N-acyl-(4R)-4-hydroxysphinganine + a 1,2-diacyl-sn-glycero-3-phosphoethanolamine = an N-acyl-(4R)-4-hydroxysphinganine-1-phosphoethanolamine + a 1,2-diacyl-sn-glycerol. The catalysed reaction is 1,2-dihexadecanoyl-sn-glycero-3-phosphocholine + an N-acylsphing-4-enine = 1,2-dihexadecanoyl-sn-glycerol + a sphingomyelin. The enzyme catalyses 1-(9Z-octadecenoyl)-2-acyl-sn-3-glycerol + a sphingomyelin = a 1-(9Z-octadecenoyl)-2-acyl-sn-glycero-3-phosphocholine + an N-acylsphing-4-enine. It catalyses the reaction N-hexadecanoylsphinganine + a 1,2-diacyl-sn-glycero-3-phosphocholine = N-hexadecanoyl-sphinganine-1-phosphocholine + a 1,2-diacyl-sn-glycerol. It carries out the reaction N-hexadecanoyl-(4R)-hydroxysphinganine + a 1,2-diacyl-sn-glycero-3-phosphocholine = N-hexadecanoyl-(4R)-hydroxysphinganine-phosphocholine + a 1,2-diacyl-sn-glycerol. The catalysed reaction is N-hexadecanoylsphinganine + a 1,2-diacyl-sn-glycero-3-phosphoethanolamine = N-hexadecanoyl-sphinganine-1-phosphoethanolamine + a 1,2-diacyl-sn-glycerol. The enzyme catalyses N-hexadecanoyl-(4R)-hydroxysphinganine + a 1,2-diacyl-sn-glycero-3-phosphoethanolamine = N-hexadecanoyl-(4R)-hydroxysphinganine-1-phosphoethanolamine + a 1,2-diacyl-sn-glycerol. It participates in sphingolipid metabolism. Functionally, sphingomyelin synthase that primarily contributes to sphingomyelin synthesis and homeostasis at the plasma membrane. Catalyzes the reversible transfer of phosphocholine moiety in sphingomyelin biosynthesis: in the forward reaction transfers phosphocholine head group of phosphatidylcholine (PC) on to ceramide (CER) to form ceramide phosphocholine (sphingomyelin, SM) and diacylglycerol (DAG) as by-product, and in the reverse reaction transfers phosphocholine from SM to DAG to form PC and CER. The direction of the reaction appears to depend on the levels of CER and DAG in the plasma membrane. Does not use free phosphorylcholine or CDP-choline as donors. Can also transfer phosphoethanolamine head group of phosphatidylethanolamine (PE) on to ceramide (CER) to form ceramide phosphoethanolamine (CPE). Regulates receptor-mediated signal transduction via mitogenic DAG and proapoptotic CER, as well as via SM, a structural component of membrane rafts that serve as platforms for signal transduction and protein sorting. To a lesser extent, plays a role in secretory transport via regulation of DAG pool at the Golgi apparatus and its downstream effects on PRKD1. Required for normal bone matrix mineralization. The chain is Phosphatidylcholine:ceramide cholinephosphotransferase 2 (Sgms2) from Rattus norvegicus (Rat).